A 367-amino-acid chain; its full sequence is DNA replication and repair protein RecF (367 aa).

30–37 (GANGSGKT) contacts ATP.

It belongs to the RecF family.

It is found in the cytoplasm. In terms of biological role, the RecF protein is involved in DNA metabolism; it is required for DNA replication and normal SOS inducibility. RecF binds preferentially to single-stranded, linear DNA. It also seems to bind ATP. The chain is DNA replication and repair protein RecF from Pseudomonas entomophila (strain L48).